Here is a 352-residue protein sequence, read N- to C-terminus: MKKINKIVLAVGGTGGHIIPALAARETFIHEDIEVLLLGKGLAHFLGDDSEIAYCDIPSGSPFSLRVNRMFSGAKQLYKGYVAALQKIRDFTPDLAIGFGSYHSLPAMLASIRSRIPLFLHEQNIVPGKVNKLFSRFAKGVGMSFAAAGEHFHCRAEEVFLPIRKLSEQIVFPGASPVICVVGGSQGAKILNDVVPKALARIRESYSNLYVHHIVGPKGDLQAVSQVYQDAGINHTVTAFDHNMLGVLQASDLVISRSGATMLNELLWVQVPAILIPYPGAYGHQEVNAKFFTHTVGGGTMILQKYLTEESLSKQVLLALDPATSENRRKAMLSAQQKKSFKSLYQFICESL.

Residues 14–16 (TGG), Asn124, Arg164, Ser185, and Gln285 each bind UDP-N-acetyl-alpha-D-glucosamine.

This sequence belongs to the glycosyltransferase 28 family. MurG subfamily.

Its subcellular location is the cell inner membrane. The catalysed reaction is di-trans,octa-cis-undecaprenyl diphospho-N-acetyl-alpha-D-muramoyl-L-alanyl-D-glutamyl-meso-2,6-diaminopimeloyl-D-alanyl-D-alanine + UDP-N-acetyl-alpha-D-glucosamine = di-trans,octa-cis-undecaprenyl diphospho-[N-acetyl-alpha-D-glucosaminyl-(1-&gt;4)]-N-acetyl-alpha-D-muramoyl-L-alanyl-D-glutamyl-meso-2,6-diaminopimeloyl-D-alanyl-D-alanine + UDP + H(+). It participates in cell wall biogenesis; peptidoglycan biosynthesis. Functionally, cell wall formation. Catalyzes the transfer of a GlcNAc subunit on undecaprenyl-pyrophosphoryl-MurNAc-pentapeptide (lipid intermediate I) to form undecaprenyl-pyrophosphoryl-MurNAc-(pentapeptide)GlcNAc (lipid intermediate II). The chain is UDP-N-acetylglucosamine--N-acetylmuramyl-(pentapeptide) pyrophosphoryl-undecaprenol N-acetylglucosamine transferase from Chlamydia trachomatis serovar L2 (strain ATCC VR-902B / DSM 19102 / 434/Bu).